A 112-amino-acid chain; its full sequence is Cell cycle protein GpsB (112 aa).

Residues 38-72 (IKDYEAFHKEFEQLKQQNARLKRELEEQKLAATQV) are a coiled coil.

Belongs to the GpsB family. Forms polymers through the coiled coil domains. Interacts with PBP1, MreC and EzrA.

The protein resides in the cytoplasm. In terms of biological role, divisome component that associates with the complex late in its assembly, after the Z-ring is formed, and is dependent on DivIC and PBP2B for its recruitment to the divisome. Together with EzrA, is a key component of the system that regulates PBP1 localization during cell cycle progression. Its main role could be the removal of PBP1 from the cell pole after pole maturation is completed. Also contributes to the recruitment of PBP1 to the division complex. Not essential for septum formation. The protein is Cell cycle protein GpsB of Bacillus anthracis (strain A0248).